Consider the following 334-residue polypeptide: Phosphate acyltransferase (334 aa).

It belongs to the PlsX family. As to quaternary structure, homodimer. Probably interacts with PlsY.

The protein resides in the cytoplasm. It carries out the reaction a fatty acyl-[ACP] + phosphate = an acyl phosphate + holo-[ACP]. The protein operates within lipid metabolism; phospholipid metabolism. Its function is as follows. Catalyzes the reversible formation of acyl-phosphate (acyl-PO(4)) from acyl-[acyl-carrier-protein] (acyl-ACP). This enzyme utilizes acyl-ACP as fatty acyl donor, but not acyl-CoA. This Thermotoga petrophila (strain ATCC BAA-488 / DSM 13995 / JCM 10881 / RKU-1) protein is Phosphate acyltransferase.